A 126-amino-acid chain; its full sequence is MAILGLGTDIVEIGRIEAVIARSGDRLARRVLSDNEWAIWETHQQPVRFLAKRFAVKEAAAKAFGTGIRNGLAFNQFEVFNDELGKPRLRLWGEAQKLAEKLGVVNMHVTLADERRYACATVILES.

Mg(2+) is bound by residues aspartate 9 and glutamate 58.

Belongs to the P-Pant transferase superfamily. AcpS family. The cofactor is Mg(2+).

The protein resides in the cytoplasm. It catalyses the reaction apo-[ACP] + CoA = holo-[ACP] + adenosine 3',5'-bisphosphate + H(+). Transfers the 4'-phosphopantetheine moiety from coenzyme A to a Ser of acyl-carrier-protein. The polypeptide is Holo-[acyl-carrier-protein] synthase (Enterobacter sp. (strain 638)).